A 348-amino-acid polypeptide reads, in one-letter code: Mitochondrial glycine transporter (348 aa).

Solcar repeat units follow at residues 10 to 94 (TKST…IREN), 130 to 214 (LSNT…SKQH), and 249 to 333 (RAAS…LIRR). 6 helical membrane-spanning segments follow: residues 16 to 41 (FVAG…TRVQ), 69 to 95 (GTLP…RENA), 136 to 161 (LLAG…VRYE), 189 to 212 (GFGA…EKSK), 253 to 279 (INFA…KTRI), and 308 to 326 (GLAL…AWTV).

This sequence belongs to the mitochondrial carrier (TC 2.A.29) family. SLC25A38 subfamily.

The protein resides in the mitochondrion inner membrane. It carries out the reaction glycine(in) = glycine(out). Its function is as follows. Mitochondrial glycine transporter that imports glycine into the mitochondrial matrix. Plays an important role in providing glycine for the first enzymatic step in heme biosynthesis, the condensation of glycine with succinyl-CoA to produce 5-aminolevulinate (ALA) in the mitochondrial matrix. This chain is Mitochondrial glycine transporter (mic-13), found in Neurospora crassa (strain ATCC 24698 / 74-OR23-1A / CBS 708.71 / DSM 1257 / FGSC 987).